We begin with the raw amino-acid sequence, 565 residues long: NAD-dependent malic enzyme (565 aa).

Residue Tyr-104 is the Proton donor of the active site. Arg-157 contributes to the NAD(+) binding site. Residue Lys-175 is the Proton acceptor of the active site. Residues Glu-246, Asp-247, and Asp-270 each coordinate a divalent metal cation. NAD(+)-binding residues include Asp-270 and Asn-418.

The protein belongs to the malic enzymes family. As to quaternary structure, homotetramer. It depends on Mg(2+) as a cofactor. Mn(2+) is required as a cofactor.

It carries out the reaction (S)-malate + NAD(+) = pyruvate + CO2 + NADH. The catalysed reaction is oxaloacetate + H(+) = pyruvate + CO2. The polypeptide is NAD-dependent malic enzyme (Salmonella dublin (strain CT_02021853)).